The primary structure comprises 212 residues: Riboflavin synthase (212 aa).

2 Lumazine-binding repeats span residues 1–97 and 98–195; these read MFTG…VGGH and LVSG…VDSV. 2,4-dihydroxypteridine-binding positions include 4–6, 48–50, 62–67, 101–103, Lys137, 146–148, and 160–165; these read GIV, CLT, DIVEET, GHI, SLT, and FLIPET.

Homotrimer.

It carries out the reaction 2 6,7-dimethyl-8-(1-D-ribityl)lumazine + H(+) = 5-amino-6-(D-ribitylamino)uracil + riboflavin. The protein operates within cofactor biosynthesis; riboflavin biosynthesis; riboflavin from 2-hydroxy-3-oxobutyl phosphate and 5-amino-6-(D-ribitylamino)uracil: step 2/2. In terms of biological role, catalyzes the dismutation of two molecules of 6,7-dimethyl-8-ribityllumazine, resulting in the formation of riboflavin and 5-amino-6-(D-ribitylamino)uracil. The polypeptide is Riboflavin synthase (ribE) (Buchnera aphidicola subsp. Baizongia pistaciae (strain Bp)).